Here is a 502-residue protein sequence, read N- to C-terminus: MFRQAKWDEPLIFELSRSGRVGYTLPKPIEDVEIRVPEKLKRKSPLNLPELSEPEVVKHYTRLSGMNYGVDSGIYPLGSCTMKYNPKINEEIAGHPGVAYVHPYQDERTIQGALKIMWELEGWLKEITGMDRFTLQPAAGANGEFTGVMIIRAYHLDRGETQRTEMLVPDSAHGTNPASAAMAGFKVIEIPSNENGTVDLEALENAVSERTAGLMLTNPNTLGIFEDEILEIAKIVHKAGGLLYYDGANLNAVLGKIRPGDMGFDIVHLNLHKTFSTPHGGGGPGSGPVGVKDFLKDYLPVPLVGYDEESGRYYLDYNVPKSIGKVKELYGNFAVMVRALTYLKIMGRDGLKEASEIAVLNANYLTQKLKGTRGYELPHKELRKHEVVFSAEPMKKETGVKALDVAKRLLDFGLHAPTIYFPLIVHEALMIEPTETVSREELDAYVEALKRISEEAYSNPELVKSAPHNTAVKRVDDVLAAKRPIITWRMYRELKEKGEVDI.

At lysine 273 the chain carries N6-(pyridoxal phosphate)lysine.

Belongs to the GcvP family. C-terminal subunit subfamily. As to quaternary structure, the glycine cleavage system is composed of four proteins: P, T, L and H. In this organism, the P 'protein' is a heterodimer of two subunits. Requires pyridoxal 5'-phosphate as cofactor.

The catalysed reaction is N(6)-[(R)-lipoyl]-L-lysyl-[glycine-cleavage complex H protein] + glycine + H(+) = N(6)-[(R)-S(8)-aminomethyldihydrolipoyl]-L-lysyl-[glycine-cleavage complex H protein] + CO2. In terms of biological role, the glycine cleavage system catalyzes the degradation of glycine. The P protein binds the alpha-amino group of glycine through its pyridoxal phosphate cofactor; CO(2) is released and the remaining methylamine moiety is then transferred to the lipoamide cofactor of the H protein. The sequence is that of Probable glycine dehydrogenase (decarboxylating) subunit 2 from Thermococcus onnurineus (strain NA1).